Reading from the N-terminus, the 323-residue chain is Aspartate carbamoyltransferase catalytic subunit (323 aa).

Residues arginine 71 and threonine 72 each contribute to the carbamoyl phosphate site. L-aspartate is bound at residue lysine 99. Carbamoyl phosphate contacts are provided by arginine 121, histidine 151, and glutamine 154. Positions 184 and 239 each coordinate L-aspartate. Residues glycine 280 and proline 281 each contribute to the carbamoyl phosphate site.

Belongs to the aspartate/ornithine carbamoyltransferase superfamily. ATCase family. Heterododecamer (2C3:3R2) of six catalytic PyrB chains organized as two trimers (C3), and six regulatory PyrI chains organized as three dimers (R2).

The catalysed reaction is carbamoyl phosphate + L-aspartate = N-carbamoyl-L-aspartate + phosphate + H(+). Its pathway is pyrimidine metabolism; UMP biosynthesis via de novo pathway; (S)-dihydroorotate from bicarbonate: step 2/3. Its function is as follows. Catalyzes the condensation of carbamoyl phosphate and aspartate to form carbamoyl aspartate and inorganic phosphate, the committed step in the de novo pyrimidine nucleotide biosynthesis pathway. In Cupriavidus metallidurans (strain ATCC 43123 / DSM 2839 / NBRC 102507 / CH34) (Ralstonia metallidurans), this protein is Aspartate carbamoyltransferase catalytic subunit.